Consider the following 214-residue polypeptide: ER lumen protein-retaining receptor (214 aa).

The Lumenal segment spans residues 1-4 (MVFN). Residues 5-23 (LFRISADLVHLLSIYFLLT) form a helical membrane-spanning segment. At 24–37 (KIISHKNCIGISLR) the chain is on the cytoplasmic side. Residues 38 to 55 (SQILFFIVWVTRYLDIFY) traverse the membrane as a helical segment. Residues 56–63 (NFYSLYNT) are Lumenal-facing. A helical transmembrane segment spans residues 64–82 (ILKIVYLTTSAYTIYLISK). The Cytoplasmic segment spans residues 83–98 (RFRATYDKIHDTLNVW). Residues 99–112 (YLIVPCIVLAFIFT) traverse the membrane as a helical segment. Topologically, residues 113-119 (EDYSITE) are lumenal. The chain crosses the membrane as a helical span at residues 120-139 (ICWTFSIFLEAVAILPQILL). The Cytoplasmic portion of the chain corresponds to 140 to 151 (LRSTGEVENLNS). Residues 152-170 (QYIFCLGLYRALYIINWIY) traverse the membrane as a helical segment. Residues 171-181 (RYATEQSYWSP) lie on the Lumenal side of the membrane. Residues 182–202 (LTWICGSIQTLLYVEYFYYYI) traverse the membrane as a helical segment. Residues 203–214 (KSRVEGTKFVLP) are Cytoplasmic-facing.

It belongs to the ERD2 family.

It is found in the endoplasmic reticulum membrane. In terms of biological role, required for the retention of luminal endoplasmic reticulum proteins. Determines the specificity of the luminal ER protein retention system. Also required for normal vesicular traffic through the Golgi. In Entamoeba histolytica (strain ATCC 30459 / HM-1:IMSS / ABRM), this protein is ER lumen protein-retaining receptor.